We begin with the raw amino-acid sequence, 488 residues long: Palmitoleoyl-protein carboxylesterase notum1 (488 aa).

The first 20 residues, 1–20, serve as a signal peptide directing secretion; it reads MAGALCVTLLLLLSTNTVSG. The N-linked (GlcNAc...) asparagine glycan is linked to asparagine 90. Catalysis depends on charge relay system residues serine 226, aspartate 334, and histidine 383.

It belongs to the pectinacetylesterase family. Notum subfamily. Expressed in the egg and through cleavage to gastrulation stages. Enriched in the animal (prospective ectoderm) and dorsal regions in early gastrula. Shows a dynamic expression during embryogenesis, in particular during neural induction and antero-posterior (AP) patterning.

Its subcellular location is the secreted. It catalyses the reaction [Wnt protein]-O-(9Z)-hexadecenoyl-L-serine + H2O = [Wnt protein]-L-serine + (9Z)-hexadecenoate + H(+). In terms of biological role, carboxylesterase that acts as a key negative regulator of the Wnt signaling pathway by specifically mediating depalmitoleoylation of WNT proteins. Serine palmitoleoylation of WNT proteins is required for efficient binding to frizzled receptors. Functions in the prospective ectoderm and is required for neural induction. The polypeptide is Palmitoleoyl-protein carboxylesterase notum1 (Xenopus laevis (African clawed frog)).